We begin with the raw amino-acid sequence, 151 residues long: 3-hydroxyacyl-[acyl-carrier-protein] dehydratase FabZ (151 aa).

The active site involves H49.

The protein belongs to the thioester dehydratase family. FabZ subfamily.

The protein localises to the cytoplasm. The catalysed reaction is a (3R)-hydroxyacyl-[ACP] = a (2E)-enoyl-[ACP] + H2O. Involved in unsaturated fatty acids biosynthesis. Catalyzes the dehydration of short chain beta-hydroxyacyl-ACPs and long chain saturated and unsaturated beta-hydroxyacyl-ACPs. The protein is 3-hydroxyacyl-[acyl-carrier-protein] dehydratase FabZ of Bordetella bronchiseptica (strain ATCC BAA-588 / NCTC 13252 / RB50) (Alcaligenes bronchisepticus).